A 1193-amino-acid chain; its full sequence is Sperm-associated antigen 5 (1193 aa).

The interval 1–48 is disordered; sequence MWRVKKLSLSLSPSPQTGKPSMRTPLRELTLQPGALTNSGKRSPACSS. Phosphoserine is present on residues S12, S14, S43, S62, and S66. The span at 35–48 shows a compositional bias: polar residues; sequence ALTNSGKRSPACSS. The segment at 96-117 is disordered; it reads ESDEQPLDPIPQISSTPKTSEE. T111 is subject to Phosphothreonine; by GSK3-beta. Residues S135, S159, and S334 each carry the phosphoserine modification. T336 carries the post-translational modification Phosphothreonine. A phosphoserine mark is found at S341, S353, and S362. Positions 390 to 405 are enriched in polar residues; that stretch reads PSAPQEKSTNTSQTGL. Residues 390 to 416 form a disordered region; that stretch reads PSAPQEKSTNTSQTGLVGTKHSTSETE. The tract at residues 482-850 is interaction with KNSTRN; the sequence is NKLQHLKESH…LKDTVENLTA (369 aa). Coiled coils occupy residues 545–608 and 759–868; these read CCFD…SMRE and QLTQ…EKTR. Phosphothreonine; by GSK3-beta is present on T937. Residue S974 is modified to Phosphoserine; by GSK3-beta. Residue T978 is modified to Phosphothreonine; by GSK3-beta. A coiled-coil region spans residues 979-1174; that stretch reads ELQSLCSLLQ…VQHIYKTLLS (196 aa).

Homodimer, with a globular head domain and a long stalk. Homooligomer; the globular head domains associate, resulting in aster-like structures. Binds to microtubules in the mitotic spindle. Interacts with DCLRE1B/Apollo. Part of an astrin (SPAG5)-kinastrin (SKAP) complex containing KNSTRN, SPAG5, PLK1, DYNLL1 and SGO2. Interacts with KNSTRN. Interacts with RPTOR; this interaction competes with RPTOR binding to MTOR, resulting in decreased mTORC1 formation. Interacts with G3BP1. The complex formed with G3BP1 AND RPTOR is increased by oxidative stress. Interacts with OSBPL8, PCM1 and CDK5RAP2. Interacts (via C-terminus) with NUMA1 (via C-terminus); this interaction promotes the recruitment of SPAG5 to the microtubules at spindle poles in a dynein-dynactin-dependent manner. Interacts with DYNLL1. In terms of processing, phosphorylated by AURKA. As to expression, highly expressed in testis. Detected at low levels in placenta, liver, pancreas, thymus and colon.

It localises to the cytoplasm. The protein localises to the cytoskeleton. The protein resides in the spindle. Its subcellular location is the spindle pole. It is found in the chromosome. It localises to the centromere. The protein localises to the kinetochore. The protein resides in the midbody. Its subcellular location is the microtubule organizing center. It is found in the centrosome. It localises to the cytoplasmic granule. The protein localises to the centriolar satellite. Functionally, essential component of the mitotic spindle required for normal chromosome segregation and progression into anaphase. Required for chromosome alignment, normal timing of sister chromatid segregation, and maintenance of spindle pole architecture. In complex with SKAP, promotes stable microtubule-kinetochore attachments. May contribute to the regulation of separase activity. May regulate AURKA localization to mitotic spindle, but not to centrosomes and CCNB1 localization to both mitotic spindle and centrosomes. Involved in centriole duplication. Required for CDK5RAP2, CEP152, WDR62 and CEP63 centrosomal localization and promotes the centrosomal localization of CDK2. In non-mitotic cells, upon stress induction, inhibits mammalian target of rapamycin complex 1 (mTORC1) association and recruits the mTORC1 component RPTOR to stress granules (SGs), thereby preventing mTORC1 hyperactivation-induced apoptosis. May enhance GSK3B-mediated phosphorylation of other substrates, such as MAPT/TAU. This Homo sapiens (Human) protein is Sperm-associated antigen 5 (SPAG5).